We begin with the raw amino-acid sequence, 141 residues long: Large ribosomal subunit protein uL11 (141 aa).

This sequence belongs to the universal ribosomal protein uL11 family. As to quaternary structure, part of the ribosomal stalk of the 50S ribosomal subunit. Interacts with L10 and the large rRNA to form the base of the stalk. L10 forms an elongated spine to which L12 dimers bind in a sequential fashion forming a multimeric L10(L12)X complex. One or more lysine residues are methylated.

Its function is as follows. Forms part of the ribosomal stalk which helps the ribosome interact with GTP-bound translation factors. The protein is Large ribosomal subunit protein uL11 of Chloroflexus aggregans (strain MD-66 / DSM 9485).